A 482-amino-acid polypeptide reads, in one-letter code: Proline--tRNA ligase (482 aa).

Residues Thr117, Glu119, and Arg148 each coordinate L-proline. 4 residues coordinate ATP: Arg148, Glu150, Gln232, and Thr235. His237 is a binding site for L-proline. Ser269 provides a ligand contact to ATP. An interaction with tRNA region spans residues 346-376 (EMRGVPLRVEIGPRDLEKGAAVISRRDTGEK). The Zn(2+) site is built by Cys436, Cys441, Cys464, and Cys467.

The protein belongs to the class-II aminoacyl-tRNA synthetase family. ProS type 3 subfamily. As to quaternary structure, homodimer. The dimer is functionally asymmetric: only one of the two active sites at a time is able to form prolyl-adenylate, and only one tRNA molecule binds per dimer. Interacts with LeuRS, which enhances tRNA(Pro) aminoacylation.

The protein resides in the cytoplasm. It catalyses the reaction tRNA(Pro) + L-proline + ATP = L-prolyl-tRNA(Pro) + AMP + diphosphate. Its function is as follows. Catalyzes the attachment of proline to tRNA(Pro) in a two-step reaction: proline is first activated by ATP to form Pro-AMP and then transferred to the acceptor end of tRNA(Pro). Can inadvertently accommodate and process cysteine. The polypeptide is Proline--tRNA ligase (proS) (Methanothermobacter thermautotrophicus (strain ATCC 29096 / DSM 1053 / JCM 10044 / NBRC 100330 / Delta H) (Methanobacterium thermoautotrophicum)).